The chain runs to 141 residues: Large ribosomal subunit protein uL11 (141 aa).

The protein belongs to the universal ribosomal protein uL11 family. Part of the ribosomal stalk of the 50S ribosomal subunit. Interacts with L10 and the large rRNA to form the base of the stalk. L10 forms an elongated spine to which L12 dimers bind in a sequential fashion forming a multimeric L10(L12)X complex. In terms of processing, one or more lysine residues are methylated.

Functionally, forms part of the ribosomal stalk which helps the ribosome interact with GTP-bound translation factors. This Carboxydothermus hydrogenoformans (strain ATCC BAA-161 / DSM 6008 / Z-2901) protein is Large ribosomal subunit protein uL11.